We begin with the raw amino-acid sequence, 681 residues long: Potassium-transporting ATPase ATP-binding subunit (681 aa).

4 helical membrane-spanning segments follow: residues 30–50 (LLVYVGAILATSLYFLGFFGI), 59–79 (LAIALILWFTVLFANFAEAIA), 216–236 (ILLVTLSIIFLTVSATLLPFT), and 255–275 (IALLVCLAPTTIGALLSSIGI). Asp-306 acts as the 4-aspartylphosphate intermediate in catalysis. Residues Asp-343, Glu-347, 376 to 383 (FTATTRMS), and Lys-394 each bind ATP. Residues Asp-517 and Asp-521 each contribute to the Mg(2+) site. A run of 3 helical transmembrane segments spans residues 587-607 (FAIIPVLFYGIFPQLEALNLM), 615-635 (AILSAIIYNAVIIIILIPLSL), and 661-681 (LIAPFIAIKLIDMLLTVLGIV).

Belongs to the cation transport ATPase (P-type) (TC 3.A.3) family. Type IA subfamily. In terms of assembly, the system is composed of three essential subunits: KdpA, KdpB and KdpC.

It is found in the cell membrane. It catalyses the reaction K(+)(out) + ATP + H2O = K(+)(in) + ADP + phosphate + H(+). Its function is as follows. Part of the high-affinity ATP-driven potassium transport (or Kdp) system, which catalyzes the hydrolysis of ATP coupled with the electrogenic transport of potassium into the cytoplasm. This subunit is responsible for energy coupling to the transport system and for the release of the potassium ions to the cytoplasm. The chain is Potassium-transporting ATPase ATP-binding subunit from Listeria monocytogenes serotype 4a (strain HCC23).